The chain runs to 226 residues: MKNERHVLIVFPHPDDESYCVAGTILAYTQRNVPLTYVCLTLGEMGRAMGNPPFATRESLYAIREKELKRATNILGIKDLRMMGYRDKTLEFETPGELRRVIQKCVEELNPSLVISFYPGYAVHPDHDATGEAVAEALATIPENKRPTFYAVAFANNHEAEIGPPHVKNEVKEYVPKKLEALQAHASQFATKVTELKREYEDGVTETVEWLEREPFWIYPFKDKNK.

His-13, Asp-16, and His-127 together coordinate Zn(2+).

It belongs to the PIGL family. The cofactor is Zn(2+).

It catalyses the reaction (S)-malyl N-acetyl-alpha-D-glucosaminide + H2O = (S)-malyl alpha-D-glucosaminide + acetate. Functionally, involved in bacillithiol (BSH) biosynthesis. Catalyzes the second step of the pathway, the deacetylation of N-acetylglucosaminylmalate (GlcNAc-Mal) to glucosamine malate (GlcN-Mal). Could also be involved in bacillithiol-detoxifying pathways through formation of S-mercapturic adducts. This chain is Probable N-acetyl-alpha-D-glucosaminyl L-malate deacetylase 2, found in Bacillus anthracis.